Reading from the N-terminus, the 244-residue chain is 6-carboxyhexanoate--CoA ligase (244 aa).

It belongs to the BioW family. As to quaternary structure, homodimer. Requires Mg(2+) as cofactor.

It catalyses the reaction heptanedioate + ATP + CoA = 6-carboxyhexanoyl-CoA + AMP + diphosphate. The protein operates within metabolic intermediate metabolism; pimeloyl-CoA biosynthesis; pimeloyl-CoA from pimelate: step 1/1. Functionally, catalyzes the transformation of pimelate into pimeloyl-CoA with concomitant hydrolysis of ATP to AMP. The protein is 6-carboxyhexanoate--CoA ligase of Hydrogenobacter thermophilus (strain DSM 6534 / IAM 12695 / TK-6).